We begin with the raw amino-acid sequence, 443 residues long: Putative transporter AmpG 1 (443 aa).

13 helical membrane passes run 5–25, 42–62, 78–98, 104–124, 143–163, 171–191, 230–250, 254–274, 299–319, 324–344, 354–374, 393–413, and 415–435; these read SHIY…MITG, IGML…APVF, LSWI…LSFL, LVLL…QDTI, GIYI…AIYL, AIYK…ILVA, FNYF…GFYF, DINL…YRLP, VCKF…GIIM, ILYS…FFIL, ILFI…TAYI, LSSM…YMVV, and FGWQ…LLIL.

The protein belongs to the major facilitator superfamily.

Its subcellular location is the cell inner membrane. This chain is Putative transporter AmpG 1 (ampG1), found in Rickettsia prowazekii (strain Madrid E).